A 280-amino-acid polypeptide reads, in one-letter code: Golgi phosphoprotein 3-like A (280 aa).

Residues 1 to 32 (MTTLIRRGRRAEEGQERRADSEDSIKDKDEEE) are disordered. Positions 10 to 32 (RAEEGQERRADSEDSIKDKDEEE) are enriched in basic and acidic residues. 4 residues coordinate a 1,2-diacyl-sn-glycero-3-phospho-(1D-myo-inositol 4-phosphate): Trp-62, Arg-71, Arg-152, and Arg-155. Residues 171 to 182 (EKQNFLLFDMTT) form a beta-hairpin required for oligomerization region.

This sequence belongs to the GOLPH3/VPS74 family. In terms of assembly, homooligomer.

The protein localises to the golgi apparatus. Its subcellular location is the golgi stack membrane. It is found in the trans-Golgi network membrane. Functionally, phosphatidylinositol-4-phosphate-binding protein that may play a role in the process of vesicle budding at the Golgi and anterograde transport to the plasma membrane. The protein is Golgi phosphoprotein 3-like A (golph3l-a) of Xenopus laevis (African clawed frog).